A 513-amino-acid chain; its full sequence is Histidine ammonia-lyase (513 aa).

A cross-link (5-imidazolinone (Ala-Gly)) is located at residues Ala144–Gly146. Ser145 carries the post-translational modification 2,3-didehydroalanine (Ser).

This sequence belongs to the PAL/histidase family. Contains an active site 4-methylidene-imidazol-5-one (MIO), which is formed autocatalytically by cyclization and dehydration of residues Ala-Ser-Gly.

The protein resides in the cytoplasm. The enzyme catalyses L-histidine = trans-urocanate + NH4(+). Its pathway is amino-acid degradation; L-histidine degradation into L-glutamate; N-formimidoyl-L-glutamate from L-histidine: step 1/3. This is Histidine ammonia-lyase from Streptococcus pyogenes serotype M3 (strain ATCC BAA-595 / MGAS315).